A 359-amino-acid polypeptide reads, in one-letter code: Src kinase-associated phosphoprotein 2 (359 aa).

Phosphoserine is present on residues Ser-5, Ser-6, and Ser-9. The segment at 14-64 (PEEIRNLLADVETFVADILKGENLSKKAKEKRESLIKKIKDVKSIYLQEFQ) is homodimerization. The tract at residues 66-88 (KGDAEDGEEYDDPFAGPPDTISL) is disordered. Phosphotyrosine is present on Tyr-75. Phosphoserine occurs at positions 87 and 90. Positions 116–219 (FVLKAGYLEK…WVQQLKFVLQ (104 aa)) constitute a PH domain. Phosphotyrosine occurs at positions 151 and 197. The residue at position 223 (Ser-223) is a Phosphoserine. At Tyr-261 the chain carries Phosphotyrosine. The segment at 264–293 (LPEEEEDSAPVKVEEQRKMSQDSVHHTSGD) is disordered. Positions 275-293 (KVEEQRKMSQDSVHHTSGD) are enriched in basic and acidic residues. Phosphoserine occurs at positions 283 and 286. An SH3 domain is found at 297–358 (DYANFYQGLW…PKAYIMEMYD (62 aa)).

This sequence belongs to the SKAP family. As to quaternary structure, homodimer. Interacts with PTPNS1. Part of a complex consisting of SKAP2, FYB1 and PTPNS1. Part of a complex consisting of SKAP2, FYB1 and LILRB3. May interact with actin. Interacts with FYB1, which is required for SKAP2 protein stability. Interacts with LAT, GRB2, PTK2B and PRAM1. May interact with FYN, HCK and LYN. Interacts with FASLG. In terms of processing, phosphorylated in resting platelets. Phosphorylated by FYN on Tyr-261 upon T-cell activation. Dephosphorylated on Tyr-75 by PTPN22. In terms of tissue distribution, ubiquitously expressed. Present in platelets (at protein level).

Its subcellular location is the cytoplasm. Functionally, may be involved in B-cell and macrophage adhesion processes. In B-cells, may act by coupling the B-cell receptor (BCR) to integrin activation. May play a role in src signaling pathway. The protein is Src kinase-associated phosphoprotein 2 (SKAP2) of Homo sapiens (Human).